A 286-amino-acid chain; its full sequence is Glycine--tRNA ligase alpha subunit (286 aa).

It belongs to the class-II aminoacyl-tRNA synthetase family. In terms of assembly, tetramer of two alpha and two beta subunits.

The protein resides in the cytoplasm. The enzyme catalyses tRNA(Gly) + glycine + ATP = glycyl-tRNA(Gly) + AMP + diphosphate. The sequence is that of Glycine--tRNA ligase alpha subunit (glyQ) from Thermotoga maritima (strain ATCC 43589 / DSM 3109 / JCM 10099 / NBRC 100826 / MSB8).